Reading from the N-terminus, the 199-residue chain is Putative pseudouridine methyltransferase (199 aa).

Met132 and Cys186 together coordinate S-adenosyl-L-methionine.

Belongs to the methyltransferase superfamily. TrmY family.

Its subcellular location is the cytoplasm. The protein is Putative pseudouridine methyltransferase of Vibrio atlanticus (strain LGP32) (Vibrio splendidus (strain Mel32)).